A 577-amino-acid chain; its full sequence is Glucose-6-phosphate 1-dehydrogenase, chloroplastic (577 aa).

The interval 1–20 is disordered; that stretch reads MGVQLRLNPCSSSSAATSPS. The transit peptide at 1 to 63 directs the protein to the chloroplast; it reads MGVQLRLNPC…QPRKHFEVFS (63 aa). Over residues 11–20 the composition is skewed to low complexity; sequence SSSSAATSPS. NADP(+)-binding positions include 97-104 and Arg131; that span reads GASGDLAK. Cys149 and Cys157 are joined by a disulfide. Position 234 (Lys234) interacts with NADP(+). D-glucose 6-phosphate-binding positions include Lys234, 264–268, Glu302, and Asp321; that span reads HYLGK. The active-site Proton acceptor is the His326. Lys419 is an NADP(+) binding site. 2 residues coordinate D-glucose 6-phosphate: Lys422 and Lys427. NADP(+)-binding residues include Arg428, Arg432, and Arg461. Gln463 serves as a coordination point for D-glucose 6-phosphate. Residues 469 to 471 and Arg554 each bind NADP(+); that span reads YLK.

Belongs to the glucose-6-phosphate dehydrogenase family. Homodimer. Green tissues, leaves and chloroplasts.

Its subcellular location is the plastid. The protein localises to the chloroplast. It carries out the reaction D-glucose 6-phosphate + NADP(+) = 6-phospho-D-glucono-1,5-lactone + NADPH + H(+). It participates in carbohydrate degradation; pentose phosphate pathway; D-ribulose 5-phosphate from D-glucose 6-phosphate (oxidative stage): step 1/3. With respect to regulation, regulated by metabolites. Post-translationally inactivated by cysteine-mediated redox modification via the ferredoxin-thioredoxin system in the light and this avoids futile cycles with photosynthetic CO2 fixation. In terms of biological role, catalyzes the rate-limiting step of the oxidative pentose-phosphate pathway, which represents a route for the dissimilation of carbohydrates besides glycolysis. The main function of this enzyme is to provide reducing power (NADPH) and pentose phosphates for fatty acid and nucleic acid synthesis which are involved in membrane synthesis and cell division. This chain is Glucose-6-phosphate 1-dehydrogenase, chloroplastic, found in Solanum tuberosum (Potato).